We begin with the raw amino-acid sequence, 896 residues long: Trehalose-phosphatase (896 aa).

The tract at residues 1 to 554 (MTTTAQDNSP…SNDDMERKMT (554 aa)) is glycosyltransferase.

The protein in the N-terminal section; belongs to the glycosyltransferase 20 family. It in the C-terminal section; belongs to the trehalose phosphatase family. As to quaternary structure, the trehalose synthase complex is composed of the two catalytic subunits TPS1 and TPS2, and at least one of the two regulatory subunits TPS3 or TSL1. Mg(2+) serves as cofactor.

It is found in the cytoplasm. It catalyses the reaction alpha,alpha-trehalose 6-phosphate + H2O = alpha,alpha-trehalose + phosphate. It functions in the pathway carbohydrate biosynthesis. Its activity is regulated as follows. Inhibited by EDTA. Its function is as follows. Phosphatase catalytic subunit of the trehalose synthase complex that catalyzes the production of trehalose from glucose-6-phosphate and UDP-alpha-D-glucose in a two step process. The sequence is that of Trehalose-phosphatase from Saccharomyces cerevisiae (strain ATCC 204508 / S288c) (Baker's yeast).